Consider the following 260-residue polypeptide: O-antigen export system permease protein RfbA (260 aa).

The next 7 membrane-spanning stretches (helical) occupy residues 31–51 (FLGF…YVLL), 63–83 (FPFF…SVGG), 109–129 (VVVT…VLGM), 139–159 (VVLF…LTYI), 173–193 (IVSN…PLST), 201–221 (SLML…AIFY), and 229–249 (EPLM…SSIF). The region spanning 32–252 (LGFLWTFLNP…WAASSIFESR (221 aa)) is the ABC transmembrane type-2 domain.

The protein belongs to the ABC-2 integral membrane protein family.

The protein resides in the cell inner membrane. Functionally, may form an ATP-driven O-antigen export apparatus, in association with RfbB. This chain is O-antigen export system permease protein RfbA (rfbA), found in Myxococcus xanthus.